A 202-amino-acid polypeptide reads, in one-letter code: Matrix protein (202 aa).

Residues 1 to 33 form a disordered region; sequence MNILRKIVKNRKDEDTQKPSPASAPPDDDDLWL. Positions 35-38 match the PPXY motif motif; the sequence is PPEY. The tract at residues 115-151 is essential for glycoprotein binding; that stretch reads KLRRTLIFQWADSRGPLEGEELEHSQEITWDDDTEFV.

It belongs to the lyssavirus matrix protein family. In terms of assembly, homomultimer. Interacts with nucleoprotein and with the cytoplasmic domain of glycoprotein. Interacts with host ATP6V1A; this interaction plays an important role in virion uncoating after viral entry.

It is found in the virion membrane. The protein localises to the host endomembrane system. Its subcellular location is the host cytoplasm. Functionally, plays a major role in assembly, budding and uncoating of virion after membrane fusion. Completely covers the ribonucleoprotein coil and keep it in condensed bullet-shaped form. Inhibits viral transcription and stimulates replication. Plays a major role in early induction of TRAIL-mediated apoptosis in infected neurons. Inhibits the integrated stress response (ISR) in the infected cell by blocking the formation of stress granules. The protein is Matrix protein (M) of Homo sapiens (Human).